The chain runs to 72 residues: LITAF domain-containing protein (72 aa).

One can recognise an LITAF domain in the interval 1–71 (MPVQAVCPYC…CQRELFYYHR (71 aa)). 2 residues coordinate Zn(2+): Cys7 and Cys10. The interval 22–45 (PGALTWLLCTTLFLFGYVLGCCFL) is membrane-binding amphipathic helix. Residues Cys59 and Cys62 each coordinate Zn(2+).

The protein belongs to the CDIP1/LITAF family.

Its subcellular location is the membrane. This chain is LITAF domain-containing protein, found in Homo sapiens (Human).